A 223-amino-acid chain; its full sequence is Holliday junction branch migration complex subunit RuvA (223 aa).

Residues 1 to 67 are domain I; the sequence is MIGWLKGEKI…EDGSNLFGFI (67 aa). A domain II region spans residues 68–146; it reads EKSERDLFRK…DFDLNNEFSP (79 aa). The tract at residues 147-157 is flexible linker; sequence PTKLRPESAED. The domain III stretch occupies residues 158 to 223; it reads LNEELLTEIK…FKQALITLNK (66 aa).

It belongs to the RuvA family. In terms of assembly, homotetramer. Forms an RuvA(8)-RuvB(12)-Holliday junction (HJ) complex. HJ DNA is sandwiched between 2 RuvA tetramers; dsDNA enters through RuvA and exits via RuvB. An RuvB hexamer assembles on each DNA strand where it exits the tetramer. Each RuvB hexamer is contacted by two RuvA subunits (via domain III) on 2 adjacent RuvB subunits; this complex drives branch migration. In the full resolvosome a probable DNA-RuvA(4)-RuvB(12)-RuvC(2) complex forms which resolves the HJ.

It is found in the cytoplasm. In terms of biological role, the RuvA-RuvB-RuvC complex processes Holliday junction (HJ) DNA during genetic recombination and DNA repair, while the RuvA-RuvB complex plays an important role in the rescue of blocked DNA replication forks via replication fork reversal (RFR). RuvA specifically binds to HJ cruciform DNA, conferring on it an open structure. The RuvB hexamer acts as an ATP-dependent pump, pulling dsDNA into and through the RuvAB complex. HJ branch migration allows RuvC to scan DNA until it finds its consensus sequence, where it cleaves and resolves the cruciform DNA. The polypeptide is Holliday junction branch migration complex subunit RuvA (Prochlorococcus marinus (strain MIT 9211)).